The primary structure comprises 116 residues: Large ribosomal subunit protein bL17 (116 aa).

It belongs to the bacterial ribosomal protein bL17 family. Part of the 50S ribosomal subunit. Contacts proteins L3 and L32.

Binds to the 23S rRNA. The polypeptide is Large ribosomal subunit protein bL17 (Deinococcus radiodurans (strain ATCC 13939 / DSM 20539 / JCM 16871 / CCUG 27074 / LMG 4051 / NBRC 15346 / NCIMB 9279 / VKM B-1422 / R1)).